The sequence spans 232 residues: Ribonuclease 3 (232 aa).

Positions 6-133 constitute an RNase III domain; it reads LKEIEENLGV…IIAAVYLDKG (128 aa). Glu-46 is a binding site for Mg(2+). The active site involves Asp-50. 2 residues coordinate Mg(2+): Asp-119 and Glu-122. The active site involves Glu-122. The 70-residue stretch at 160–229 folds into the DRBM domain; it reads DFKTKLQELL…AKQALDILEG (70 aa).

This sequence belongs to the ribonuclease III family. Homodimer. Mg(2+) is required as a cofactor.

It is found in the cytoplasm. It catalyses the reaction Endonucleolytic cleavage to 5'-phosphomonoester.. Its function is as follows. Digests double-stranded RNA. Involved in the processing of primary rRNA transcript to yield the immediate precursors to the large and small rRNAs (23S and 16S). Processes some mRNAs, and tRNAs when they are encoded in the rRNA operon. Processes pre-crRNA and tracrRNA of type II CRISPR loci if present in the organism. The chain is Ribonuclease 3 from Clostridium beijerinckii (strain ATCC 51743 / NCIMB 8052) (Clostridium acetobutylicum).